The following is a 173-amino-acid chain: Lipid A deacylase PagL (173 aa).

A signal peptide spans 1 to 23; the sequence is MKKLLPLAVLAALSSVHVASAQA. The Periplasmic portion of the chain corresponds to 25–28; it reads DVSA. A beta stranded transmembrane segment spans residues 29 to 32; it reads AVGA. Residue T33 is a topological domain, periplasmic. A beta stranded transmembrane segment spans residues 34–49; that stretch reads GQSGMTYRLGLSWDWD. At 50–56 the chain is on the extracellular side; that stretch reads KSWWQTS. Residues 57–71 traverse the membrane as a beta stranded segment; sequence TGRLTGYWDAGYTYW. The Periplasmic portion of the chain corresponds to 72-73; it reads EG. Residues 74-89 form a beta stranded membrane-spanning segment; the sequence is GDEGAGKHSLSFAPVF. Residue V90 is a topological domain, extracellular. The chain crosses the membrane as a beta stranded span at residues 91 to 93; sequence YEF. Residues 94-95 are Periplasmic-facing; the sequence is AG. Residues 96-98 form a beta stranded membrane-spanning segment; sequence DSI. Residues 99-100 lie on the Extracellular side of the membrane; sequence KP. A beta stranded transmembrane segment spans residues 101 to 115; that stretch reads FIEAGIGVAAFSGTR. Over 116-117 the chain is Periplasmic; the sequence is VG. The chain crosses the membrane as a beta stranded span at residues 118-128; sequence DQNLGSSLNFE. Over 129–138 the chain is Extracellular; sequence DRIGAGLKFA. A beta stranded membrane pass occupies residues 139 to 148; sequence NGQSVGVRAI. Residues H149, S151, and E163 each act as charge relay system in the active site. The Periplasmic portion of the chain corresponds to 149–173; it reads HYSNAGLKQPNDGIESYSLFYKIPI.

Belongs to the PagL family. Homodimer.

Its subcellular location is the cell outer membrane. It carries out the reaction a 3-(acyloxy)acyl derivative of bacterial toxin + H2O = a 3-hydroxyacyl derivative of bacterial toxin + a fatty acid + H(+). With respect to regulation, decreased activity at low temperatures (15 or 21 degrees Celsius). Functionally, has lipid A 3-O-deacylase activity. Hydrolyzes the ester bond at the 3 position of lipid A, a bioactive component of lipopolysaccharide (LPS), thereby releasing the primary fatty acyl moiety. Lacks fatty acyl chain-length specificity as removes both 3-OH C10 and 3-OH C14 fatty acids from lipid A. The chain is Lipid A deacylase PagL from Pseudomonas aeruginosa (strain ATCC 15692 / DSM 22644 / CIP 104116 / JCM 14847 / LMG 12228 / 1C / PRS 101 / PAO1).